A 193-amino-acid chain; its full sequence is Small ribosomal subunit protein uS7 (193 aa).

Belongs to the universal ribosomal protein uS7 family. In terms of assembly, part of the 30S ribosomal subunit.

Functionally, one of the primary rRNA binding proteins, it binds directly to 16S rRNA where it nucleates assembly of the head domain of the 30S subunit. Is located at the subunit interface close to the decoding center. In Saccharolobus solfataricus (strain ATCC 35092 / DSM 1617 / JCM 11322 / P2) (Sulfolobus solfataricus), this protein is Small ribosomal subunit protein uS7.